The following is a 259-amino-acid chain: tRNA-cytidine(32) 2-sulfurtransferase (259 aa).

The PP-loop motif motif lies at 40–45; sequence SGGKDS. [4Fe-4S] cluster is bound by residues Cys114, Cys117, and Cys205.

Belongs to the TtcA family. Homodimer. The cofactor is Mg(2+). It depends on [4Fe-4S] cluster as a cofactor.

Its subcellular location is the cytoplasm. The catalysed reaction is cytidine(32) in tRNA + S-sulfanyl-L-cysteinyl-[cysteine desulfurase] + AH2 + ATP = 2-thiocytidine(32) in tRNA + L-cysteinyl-[cysteine desulfurase] + A + AMP + diphosphate + H(+). It participates in tRNA modification. Catalyzes the ATP-dependent 2-thiolation of cytidine in position 32 of tRNA, to form 2-thiocytidine (s(2)C32). The sulfur atoms are provided by the cysteine/cysteine desulfurase (IscS) system. The protein is tRNA-cytidine(32) 2-sulfurtransferase of Bdellovibrio bacteriovorus (strain ATCC 15356 / DSM 50701 / NCIMB 9529 / HD100).